The primary structure comprises 108 residues: MAVEDVVLASVRSVVKISFGCKIFSMSSSFKLGKGSIRGASLTFDSLVVPVFAALFMAPTIQLSFCLFCFLSLPALFVKHTSNSLPLSTGTVLLFGICCQVAKSLLKI.

The next 2 helical transmembrane spans lie at 51 to 71 and 86 to 106; these read VFAALFMAPTIQLSFCLFCFL and PLSTGTVLLFGICCQVAKSLL.

The protein resides in the membrane. This is an uncharacterized protein from Saccharomyces cerevisiae (strain ATCC 204508 / S288c) (Baker's yeast).